The primary structure comprises 375 residues: Glutamate 5-kinase (375 aa).

K17 is an ATP binding site. Substrate-binding residues include S57, D144, and N156. 176–177 (TD) is an ATP binding site. Residues 283 to 361 (KGRLWLDTGA…HQIEQILGYV (79 aa)) enclose the PUA domain.

The protein belongs to the glutamate 5-kinase family.

It localises to the cytoplasm. The enzyme catalyses L-glutamate + ATP = L-glutamyl 5-phosphate + ADP. The protein operates within amino-acid biosynthesis; L-proline biosynthesis; L-glutamate 5-semialdehyde from L-glutamate: step 1/2. Its function is as follows. Catalyzes the transfer of a phosphate group to glutamate to form L-glutamate 5-phosphate. In Nitrosococcus oceani (strain ATCC 19707 / BCRC 17464 / JCM 30415 / NCIMB 11848 / C-107), this protein is Glutamate 5-kinase.